The following is a 146-amino-acid chain: Transcription antitermination protein NusB (146 aa).

This sequence belongs to the NusB family.

In terms of biological role, involved in transcription antitermination. Required for transcription of ribosomal RNA (rRNA) genes. Binds specifically to the boxA antiterminator sequence of the ribosomal RNA (rrn) operons. The sequence is that of Transcription antitermination protein NusB from Herpetosiphon aurantiacus (strain ATCC 23779 / DSM 785 / 114-95).